Here is a 537-residue protein sequence, read N- to C-terminus: MSKLIEYDETARHAMEVGMNKLADTVRVTLGPRGRHVVLAKAFGGPTITNDGVTVAREIDLEDPFENLGAQLVKSVATKTNDVAGDGTTTATVLAQALVKGGLRMVAAGANPVALGAGISKAADAVSEALLAVATPVAGKDAITQVATVSSRDEQIGALVGEGMNKVGTDGVVSVEESSTLDTELEFTEGVGFDKGFLSAYFVTDFDSQQAVLDDPLVLLHQEKISSLPELLPMLEKVTESGKPLLIVAEDLEGEALATLVVNSIRKTLKAVAVKSPFFGDRRKAFLEDLAIVTGGQVVNPETGLVLREVGTDVLGSARRVVVSKDDTIIVDGGGSNDAVAKRVNQLRAEIEVSDSEWDREKLQERVAKLAGGVAVIKVGAVTETALKKRKESVEDAVAAAKASIEEGIIAGGGSALVQCGAALKQLRTSLTGDEALGIDVFFEALKAPLYWIATNAGLDGAVVVDKVSGLPAGHGLNASTLGYGDLVADGVVDPVKVTRSAVLNAASVARMMLTTETAVVDKPAKTEEHDHHGHAH.

Residues 29-32 (TLGP), 86-90 (DGTTT), G413, and D494 contribute to the ATP site.

Belongs to the chaperonin (HSP60) family. Forms a cylinder of 14 subunits composed of two heptameric rings stacked back-to-back. Interacts with the co-chaperonin GroES.

It is found in the cytoplasm. It carries out the reaction ATP + H2O + a folded polypeptide = ADP + phosphate + an unfolded polypeptide.. In terms of biological role, together with its co-chaperonin GroES, plays an essential role in assisting protein folding. The GroEL-GroES system forms a nano-cage that allows encapsulation of the non-native substrate proteins and provides a physical environment optimized to promote and accelerate protein folding. This chain is Chaperonin GroEL 1, found in Mycobacterium leprae (strain TN).